The following is a 124-amino-acid chain: Protein MT1307 (124 aa).

The segment at residues 1-35 (MTTMITLRRRFAVAVAGVATAAATTVTLAPAPANA) is a signal peptide (tat-type signal).

This sequence to M.tuberculosis Rv1813c. In terms of processing, predicted to be exported by the Tat system. The position of the signal peptide cleavage has not been experimentally proven.

In Mycobacterium tuberculosis (strain CDC 1551 / Oshkosh), this protein is Protein MT1307.